Consider the following 689-residue polypeptide: Elongation factor G (689 aa).

One can recognise a tr-type G domain in the interval 9–283 (AKFRNIGIMA…AIIEFMPSPL (275 aa)). GTP contacts are provided by residues 18–25 (AHIDAGKT), 82–86 (DTPGH), and 136–139 (NKMD).

It belongs to the TRAFAC class translation factor GTPase superfamily. Classic translation factor GTPase family. EF-G/EF-2 subfamily.

The protein localises to the cytoplasm. Catalyzes the GTP-dependent ribosomal translocation step during translation elongation. During this step, the ribosome changes from the pre-translocational (PRE) to the post-translocational (POST) state as the newly formed A-site-bound peptidyl-tRNA and P-site-bound deacylated tRNA move to the P and E sites, respectively. Catalyzes the coordinated movement of the two tRNA molecules, the mRNA and conformational changes in the ribosome. The polypeptide is Elongation factor G (Clostridium botulinum (strain Okra / Type B1)).